The primary structure comprises 404 residues: Magnesium transporter NIPA4 (404 aa).

Residues 1-55 (MELRVSNTSCENGSLLHLYCSSQEVLCQIVNDLSPEVPSNATFHSWQERIRQNYG) are Extracellular-facing. N-linked (GlcNAc...) asparagine glycosylation is found at Asn-7, Asn-12, and Asn-40. Residues 56–76 (FYIGLGLAFLSSFLIGSSVIL) form a helical membrane-spanning segment. Topologically, residues 77-102 (KKKGLLRLVATGATRAVDGGFGYLKD) are cytoplasmic. A helical transmembrane segment spans residues 103–123 (AMWWAGFLTMAAGEVANFGAY). Position 124 (Ala-124) is a topological domain, extracellular. The helical transmembrane segment at 125–145 (FAPATVVTPLGALSVLISAIL) threads the bilayer. Residues 146-153 (SSYFLRES) are Cytoplasmic-facing. The chain crosses the membrane as a helical span at residues 154–174 (LNLLGKLGCVICVAGSTVMVI). Over 175–195 (HAPEEEKVTTIMEMASKMKDT) the chain is Extracellular. The helical transmembrane segment at 196 to 216 (GFIVFAVLLLVSCLILIFVIA) threads the bilayer. Residues 217–223 (PRYGQRN) lie on the Cytoplasmic side of the membrane. A helical transmembrane segment spans residues 224–244 (ILIYIIICSVIGAFSVAAVKG). The Extracellular portion of the chain corresponds to 245 to 261 (LGITIKNFFQGLPVVRH). The chain crosses the membrane as a helical span at residues 262 to 282 (PLPYILSLILALSLSTQVNFL). Residues 283-293 (NRALDIFNTSL) are Cytoplasmic-facing. A helical transmembrane segment spans residues 294–314 (VFPIYYVFFTTVVVTSSIILF). Topologically, residues 315-324 (KEWYSMSAVD) are extracellular. The helical transmembrane segment at 325–345 (IAGTLSGFVTIILGVFMLHAF) threads the bilayer. Over 346 to 404 (KDLDISCASLPHMHKNPPPSPAPEPTVIRLEDKNVLVDNIELASTSSPEEKPKVFIIHS) the chain is Cytoplasmic.

This sequence belongs to the NIPA family. In terms of tissue distribution, highly expressed in brain, lung, stomach, keratinocytes and leukocytes, and in all other tissues tested except liver, thyroid and fetal brain.

The protein localises to the cell membrane. It catalyses the reaction Mg(2+)(in) = Mg(2+)(out). Acts as a Mg(2+) transporter. Can also transport other divalent cations such as Ba(2+), Sr(2+) and Fe(2+) but to a much less extent than Mg(2+). May be a receptor for ligands (trioxilins A3 and B3) from the hepoxilin pathway. In Homo sapiens (Human), this protein is Magnesium transporter NIPA4 (NIPAL4).